A 696-amino-acid chain; its full sequence is Phosphate acetyltransferase (696 aa).

Residues 367–696 (FEHKLLEQAR…QSPHEKATAQ (330 aa)) form a phosphate acetyltransferase region.

The protein in the N-terminal section; belongs to the CobB/CobQ family. It in the C-terminal section; belongs to the phosphate acetyltransferase and butyryltransferase family.

It is found in the cytoplasm. It carries out the reaction acetyl-CoA + phosphate = acetyl phosphate + CoA. It functions in the pathway metabolic intermediate biosynthesis; acetyl-CoA biosynthesis; acetyl-CoA from acetate: step 2/2. Its function is as follows. Involved in acetate metabolism. This Streptomyces avermitilis (strain ATCC 31267 / DSM 46492 / JCM 5070 / NBRC 14893 / NCIMB 12804 / NRRL 8165 / MA-4680) protein is Phosphate acetyltransferase (pta).